The primary structure comprises 225 residues: Probable 3-keto-L-gulonate-6-phosphate decarboxylase (225 aa).

Residue aspartate 11 participates in substrate binding. 2 residues coordinate Mg(2+): glutamate 33 and aspartate 62. Arginine 202 is a substrate binding site.

This sequence belongs to the HPS/KGPDC family. KGPDC subfamily. In terms of assembly, homodimer. Mg(2+) is required as a cofactor.

The enzyme catalyses 3-dehydro-L-gulonate 6-phosphate + H(+) = L-xylulose 5-phosphate + CO2. In terms of biological role, catalyzes the decarboxylation of 3-keto-L-gulonate-6-P into L-xylulose-5-P. This chain is Probable 3-keto-L-gulonate-6-phosphate decarboxylase (sgbH), found in Haemophilus influenzae (strain ATCC 51907 / DSM 11121 / KW20 / Rd).